Here is a 309-residue protein sequence, read N- to C-terminus: Ribosomal protein L11 methyltransferase (309 aa).

S-adenosyl-L-methionine contacts are provided by Thr144, Gly165, Asp187, and Asn235.

This sequence belongs to the methyltransferase superfamily. PrmA family.

The protein localises to the cytoplasm. It catalyses the reaction L-lysyl-[protein] + 3 S-adenosyl-L-methionine = N(6),N(6),N(6)-trimethyl-L-lysyl-[protein] + 3 S-adenosyl-L-homocysteine + 3 H(+). Methylates ribosomal protein L11. This is Ribosomal protein L11 methyltransferase from Prochlorococcus marinus (strain MIT 9215).